An 82-amino-acid chain; its full sequence is Conotoxin Tx6.6 (82 aa).

Positions 1 to 19 (MKLTCVMIVAVLFLTAWTL) are cleaved as a signal peptide. A propeptide spanning residues 20-51 (VMADDSNNGLANLFSKLRDEMEDPEGSKLEKK) is cleaved from the precursor. 3 disulfides stabilise this stretch: cysteine 53-cysteine 71, cysteine 60-cysteine 76, and cysteine 70-cysteine 81. Alanine 82 is subject to Alanine amide; partial.

This sequence belongs to the O1 superfamily. Expressed by the venom duct.

Its subcellular location is the secreted. Omega-conotoxins act at presynaptic membranes, they bind and block voltage-gated calcium channels (Cav). This is Conotoxin Tx6.6 from Conus textile (Cloth-of-gold cone).